Consider the following 134-residue polypeptide: Small ribosomal subunit protein uS11 (134 aa).

The protein belongs to the universal ribosomal protein uS11 family. In terms of assembly, part of the 30S ribosomal subunit. Interacts with proteins S7 and S18. Binds to IF-3.

Its function is as follows. Located on the platform of the 30S subunit, it bridges several disparate RNA helices of the 16S rRNA. Forms part of the Shine-Dalgarno cleft in the 70S ribosome. The chain is Small ribosomal subunit protein uS11 from Variovorax paradoxus (strain S110).